Reading from the N-terminus, the 78-residue chain is Bowman-Birk type proteinase inhibitors I-A, I-B, and I-A' (78 aa).

Disulfide bonds link C18-C72, C19-C34, C22-C68, C24-C32, C42-C49, C46-C61, and C51-C59.

This sequence belongs to the Bowman-Birk serine protease inhibitor family.

Functionally, these inhibitors strongly inhibit trypsin. This chain is Bowman-Birk type proteinase inhibitors I-A, I-B, and I-A', found in Phaseolus angularis (Azuki bean).